A 318-amino-acid polypeptide reads, in one-letter code: NADH-ubiquinone oxidoreductase chain 1 (318 aa).

Transmembrane regions (helical) follow at residues 2–22 (FLMNILCLVIPILLAMAFLTL), 37–57 (PNIVGPYGLLQPIADAIKLFI), 69–89 (LMFTLAPTLAFTLALSLWIPM), 100–120 (LGVLFILALSSLAVYSILWSG), 136–156 (VAQTISYEVTLAIILLSVMMM), 171–191 (HMWLILPLWPLAMMWFISTLA), 231–251 (IIMMNALTATLFLGAFHNPLF), 253–273 (ELFTVNFITKTLILTAIFLWV), and 293–313 (FLPLTLALCMLHVSIPALSAG).

This sequence belongs to the complex I subunit 1 family. In terms of assembly, core subunit of respiratory chain NADH dehydrogenase (Complex I) which is composed of 45 different subunits.

It localises to the mitochondrion inner membrane. It carries out the reaction a ubiquinone + NADH + 5 H(+)(in) = a ubiquinol + NAD(+) + 4 H(+)(out). Functionally, core subunit of the mitochondrial membrane respiratory chain NADH dehydrogenase (Complex I) which catalyzes electron transfer from NADH through the respiratory chain, using ubiquinone as an electron acceptor. Essential for the catalytic activity and assembly of complex I. The polypeptide is NADH-ubiquinone oxidoreductase chain 1 (MT-ND1) (Zaedyus pichiy (Pichi)).